The following is a 208-amino-acid chain: Small ribosomal subunit protein bS6 (208 aa).

Disordered stretches follow at residues 121–143 (SENN…KPRL) and 185–208 (NQQT…GAKP). Residues 185–195 (NQQTSQANNNQ) show a composition bias toward low complexity.

Belongs to the bacterial ribosomal protein bS6 family.

In terms of biological role, binds together with bS18 to 16S ribosomal RNA. The sequence is that of Small ribosomal subunit protein bS6 (rpsF) from Mycoplasma genitalium (strain ATCC 33530 / DSM 19775 / NCTC 10195 / G37) (Mycoplasmoides genitalium).